The following is a 488-amino-acid chain: 3-octaprenyl-4-hydroxybenzoate carboxy-lyase (488 aa).

Residue Asn-172 participates in Mn(2+) binding. Prenylated FMN is bound by residues 175 to 177 (IYR), 189 to 191 (RWL), and 194 to 195 (RG). Glu-238 serves as a coordination point for Mn(2+). Residue Asp-287 is the Proton donor of the active site.

The protein belongs to the UbiD family. As to quaternary structure, homohexamer. It depends on prenylated FMN as a cofactor. Requires Mn(2+) as cofactor.

The protein localises to the cell membrane. The enzyme catalyses a 4-hydroxy-3-(all-trans-polyprenyl)benzoate + H(+) = a 2-(all-trans-polyprenyl)phenol + CO2. It functions in the pathway cofactor biosynthesis; ubiquinone biosynthesis. Its function is as follows. Catalyzes the decarboxylation of 3-octaprenyl-4-hydroxy benzoate to 2-octaprenylphenol, an intermediate step in ubiquinone biosynthesis. This chain is 3-octaprenyl-4-hydroxybenzoate carboxy-lyase, found in Legionella pneumophila (strain Corby).